The following is a 150-amino-acid chain: uncharacterized protein (150 aa).

Residues 3–145 (VAILSGSVYG…DAEPWLAEFA (143 aa)) enclose the Flavodoxin-like domain.

The protein belongs to the flavodoxin family. MioC subfamily. It depends on FMN as a cofactor.

In terms of biological role, probable electron transporter. This is an uncharacterized protein from Pseudomonas aeruginosa (strain ATCC 15692 / DSM 22644 / CIP 104116 / JCM 14847 / LMG 12228 / 1C / PRS 101 / PAO1).